The sequence spans 101 residues: Large ribosomal subunit protein uL23 (101 aa).

It belongs to the universal ribosomal protein uL23 family. As to quaternary structure, part of the 50S ribosomal subunit. Contacts protein L29, and trigger factor when it is bound to the ribosome.

Functionally, one of the early assembly proteins it binds 23S rRNA. One of the proteins that surrounds the polypeptide exit tunnel on the outside of the ribosome. Forms the main docking site for trigger factor binding to the ribosome. This is Large ribosomal subunit protein uL23 from Corynebacterium jeikeium (strain K411).